Consider the following 250-residue polypeptide: Ribonuclease HII (250 aa).

Residues 66–250 (ELVAGVDEVG…TFAPVSDFFK (185 aa)) enclose the RNase H type-2 domain. Positions 72, 73, and 164 each coordinate a divalent metal cation.

Belongs to the RNase HII family. Mn(2+) serves as cofactor. Mg(2+) is required as a cofactor.

Its subcellular location is the cytoplasm. The catalysed reaction is Endonucleolytic cleavage to 5'-phosphomonoester.. Endonuclease that specifically degrades the RNA of RNA-DNA hybrids. This chain is Ribonuclease HII, found in Lactobacillus helveticus (strain DPC 4571).